We begin with the raw amino-acid sequence, 255 residues long: MHSSPELLLEARGIRKSYHKDKIELPILRGIDVGFVTGEMSALVGRSGSGKSTLMHLLATLDQPDSGEVWFDGTRIDNQSRARRDQYRNSQIGIIFQFYHLLPELSAIENVLAPAMIRRSVLGYLRDRKSLRLRAEAMLDRVGLLTRSHHQPSEMSGGEMQRVAIARSLMSNPKLLLADEPTGNLDTETGATILSLLRELNREDELTIVMITHDDSIAETADRCYRMCDGLLEDNASNLAGGDRSDSAKLETVAA.

Residues 9 to 254 form the ABC transporter domain; it reads LEARGIRKSY…SDSAKLETVA (246 aa). An ATP-binding site is contributed by 45–52; that stretch reads GRSGSGKS.

Belongs to the ABC transporter superfamily. Lipoprotein translocase (TC 3.A.1.125) family. In terms of assembly, the complex is composed of two ATP-binding proteins (LolD) and two transmembrane proteins (LolC and LolE).

It is found in the cell inner membrane. In terms of biological role, part of the ABC transporter complex LolCDE involved in the translocation of mature outer membrane-directed lipoproteins, from the inner membrane to the periplasmic chaperone, LolA. Responsible for the formation of the LolA-lipoprotein complex in an ATP-dependent manner. In Rhodopirellula baltica (strain DSM 10527 / NCIMB 13988 / SH1), this protein is Lipoprotein-releasing system ATP-binding protein LolD 2.